The chain runs to 321 residues: Lipoyl synthase (321 aa).

Residues C68, C73, C79, C94, C98, C101, and S308 each contribute to the [4Fe-4S] cluster site. The Radical SAM core domain occupies 80 to 297 (FNHGTATFMI…KVLADELGFT (218 aa)).

The protein belongs to the radical SAM superfamily. Lipoyl synthase family. The cofactor is [4Fe-4S] cluster.

The protein resides in the cytoplasm. The catalysed reaction is [[Fe-S] cluster scaffold protein carrying a second [4Fe-4S](2+) cluster] + N(6)-octanoyl-L-lysyl-[protein] + 2 oxidized [2Fe-2S]-[ferredoxin] + 2 S-adenosyl-L-methionine + 4 H(+) = [[Fe-S] cluster scaffold protein] + N(6)-[(R)-dihydrolipoyl]-L-lysyl-[protein] + 4 Fe(3+) + 2 hydrogen sulfide + 2 5'-deoxyadenosine + 2 L-methionine + 2 reduced [2Fe-2S]-[ferredoxin]. It functions in the pathway protein modification; protein lipoylation via endogenous pathway; protein N(6)-(lipoyl)lysine from octanoyl-[acyl-carrier-protein]: step 2/2. Its function is as follows. Catalyzes the radical-mediated insertion of two sulfur atoms into the C-6 and C-8 positions of the octanoyl moiety bound to the lipoyl domains of lipoate-dependent enzymes, thereby converting the octanoylated domains into lipoylated derivatives. This chain is Lipoyl synthase, found in Shewanella sp. (strain ANA-3).